The sequence spans 236 residues: uncharacterized protein (236 aa).

Positions 1-12 are enriched in basic residues; sequence MKLLGHRKSHGH. Positions 1–108 are disordered; that stretch reads MKLLGHRKSH…KAANRARMTE (108 aa). The segment covering 13–31 has biased composition (basic and acidic residues); it reads QRADASPDAGSKDGCRPDS. Over residues 32 to 47 the composition is skewed to low complexity; sequence GRTSGSDTSRGSQTTG. The span at 52–65 shows a compositional bias: basic residues; it reads PTPKRNQSRRHTKK. Low complexity predominate over residues 67–78; that stretch reads PVAPAPMTAAQA. Residues 90 to 108 are compositionally biased toward basic and acidic residues; the sequence is LSREERRAEKAANRARMTE. 2 helical membrane-spanning segments follow: residues 142–162 and 166–186; these read NLLG…FAVP and FYLS…AIIL.

Its subcellular location is the cell membrane. This is an uncharacterized protein from Mycobacterium tuberculosis (strain CDC 1551 / Oshkosh).